The chain runs to 167 residues: Probable chorismate pyruvate-lyase (167 aa).

Substrate contacts are provided by R71, I110, and E150.

This sequence belongs to the UbiC family.

It localises to the cytoplasm. It carries out the reaction chorismate = 4-hydroxybenzoate + pyruvate. Its pathway is cofactor biosynthesis; ubiquinone biosynthesis. In terms of biological role, removes the pyruvyl group from chorismate, with concomitant aromatization of the ring, to provide 4-hydroxybenzoate (4HB) for the ubiquinone pathway. This Acinetobacter baylyi (strain ATCC 33305 / BD413 / ADP1) protein is Probable chorismate pyruvate-lyase.